We begin with the raw amino-acid sequence, 226 residues long: 2-C-methyl-D-erythritol 4-phosphate cytidylyltransferase (226 aa).

It belongs to the IspD/TarI cytidylyltransferase family. IspD subfamily.

It catalyses the reaction 2-C-methyl-D-erythritol 4-phosphate + CTP + H(+) = 4-CDP-2-C-methyl-D-erythritol + diphosphate. The protein operates within isoprenoid biosynthesis; isopentenyl diphosphate biosynthesis via DXP pathway; isopentenyl diphosphate from 1-deoxy-D-xylulose 5-phosphate: step 2/6. Catalyzes the formation of 4-diphosphocytidyl-2-C-methyl-D-erythritol from CTP and 2-C-methyl-D-erythritol 4-phosphate (MEP). In Haemophilus ducreyi (strain 35000HP / ATCC 700724), this protein is 2-C-methyl-D-erythritol 4-phosphate cytidylyltransferase.